The following is a 217-amino-acid chain: uncharacterized protein (217 aa).

The next 6 helical transmembrane spans lie at 13-35 (IWLT…IALL), 50-68 (FSLV…ILYL), 75-94 (FLLA…EWRI), 109-131 (MMAL…LFSL), 152-174 (YLAI…AAAV), and 194-216 (GFSL…FAGL).

Its subcellular location is the cell membrane. This is an uncharacterized protein from Archaeoglobus fulgidus (strain ATCC 49558 / DSM 4304 / JCM 9628 / NBRC 100126 / VC-16).